Consider the following 787-residue polypeptide: MPPKTLFPLVPACDAAPRKKRLAVALLAVPGLVPAVSQAQLSGAAAEPQAFGSPWDLRLAPQLDEHPQKQGGKPATFVLADHTNGTAEQDLAAKGAAEIRRGNAAVKADAIHYDQDTDMADAYGKVTVANGGTTFSGPEAHLKVEANQGFMTTPKYRFTATGGTGSAERVQLLDSERSVFTNGTYTGCQCSTNPAWYIKGSEFDFDTGADEGVARNGVLFFQGVPLFGSPWLTFPLSGDRRSGFLPPTFSPFSSTNGFELSLPYYFNIAPNRDLTITPHIISKRGIFTQATFRYLSTNYSGTLTGEYLPDDRVAHRNRYAIFWQHQQNFGNGFGGYVYYNKVSDNLYPEELGSTNQFVNGVQTVYQQEAGLTYNNGPWSVLGRYQHWQTLPPSAAPYGREPQLNVKYTKYNVGGFDFGAEADYSRFRITTADQPEGDRVMFNPYVSYGLYGPGYFFVPKAQLHMASYDLTTTTGGVPGQPKRFTYSIPTLSLDTGLVFDRSVRLFGQDFIQTLEPRLFYVYTPYRNQSNAPLFDTAVSDFGLAEIFTPNTFVGNDRIADANRLTAALTTRFINPTTGDERARFVIAQQYYFTDQRVTLLPTEAPATARHSDLILGASVKLGAGFASETAFQYNVDNNQLVKSSVGFGYSPGERRVINVGYRYTRQNPTLSNEPINQILMSAQWPLTRRLYAVGRLNYDLASSRVVDGLVGFQYDADCWAFGVGVQRYANGLNSSGQQNSSTRVLAQLVLKGLTSIDNGLVTAFRAGVQGYTPLPPAPAPLSRFSNYD.

The first 39 residues, 1–39 (MPPKTLFPLVPACDAAPRKKRLAVALLAVPGLVPAVSQA), serve as a signal peptide directing secretion.

Belongs to the LptD family. Component of the lipopolysaccharide transport and assembly complex. Interacts with LptE and LptA.

Its subcellular location is the cell outer membrane. In terms of biological role, together with LptE, is involved in the assembly of lipopolysaccharide (LPS) at the surface of the outer membrane. The sequence is that of LPS-assembly protein LptD from Burkholderia pseudomallei (strain 1710b).